Here is a 335-residue protein sequence, read N- to C-terminus: Glyceraldehyde-3-phosphate dehydrogenase (335 aa).

NAD(+) contacts are provided by residues 12-13 (RI), aspartate 34, arginine 78, and serine 120. D-glyceraldehyde 3-phosphate contacts are provided by residues 151-153 (SCT) and threonine 182. Residue cysteine 152 is the Nucleophile of the active site. NAD(+) is bound at residue asparagine 183. Residues arginine 197, 210-211 (TG), and arginine 233 contribute to the D-glyceraldehyde 3-phosphate site. Asparagine 315 is an NAD(+) binding site.

The protein belongs to the glyceraldehyde-3-phosphate dehydrogenase family. As to quaternary structure, homotetramer.

Its subcellular location is the cytoplasm. It catalyses the reaction D-glyceraldehyde 3-phosphate + phosphate + NAD(+) = (2R)-3-phospho-glyceroyl phosphate + NADH + H(+). The protein operates within carbohydrate degradation; glycolysis; pyruvate from D-glyceraldehyde 3-phosphate: step 1/5. Functionally, catalyzes the oxidative phosphorylation of glyceraldehyde 3-phosphate (G3P) to 1,3-bisphosphoglycerate (BPG) using the cofactor NAD. The first reaction step involves the formation of a hemiacetal intermediate between G3P and a cysteine residue, and this hemiacetal intermediate is then oxidized to a thioester, with concomitant reduction of NAD to NADH. The reduced NADH is then exchanged with the second NAD, and the thioester is attacked by a nucleophilic inorganic phosphate to produce BPG. This Priestia megaterium (strain DSM 319 / IMG 1521) (Bacillus megaterium) protein is Glyceraldehyde-3-phosphate dehydrogenase (gap).